A 601-amino-acid chain; its full sequence is Zinc finger CCCH domain-containing protein 33 (601 aa).

2 ANK repeats span residues 71-101 (ERRT…EAAR) and 106-138 (DGAT…SVDA). Positions 167–180 (PAVSPSSSPKKSAS) are enriched in low complexity. The disordered stretch occupies residues 167 to 203 (PAVSPSSSPKKSASPPSPPPPQEAKKEYPPDLTLPDL). C3H1-type zinc fingers lie at residues 252–280 (SYSC…HGVF) and 288–312 (QYRT…HKPD).

This is Zinc finger CCCH domain-containing protein 33 from Oryza sativa subsp. japonica (Rice).